The sequence spans 128 residues: Large ribosomal subunit protein uL24 (128 aa).

This sequence belongs to the universal ribosomal protein uL24 family. In terms of assembly, part of the 50S ribosomal subunit.

Its function is as follows. One of two assembly initiator proteins, it binds directly to the 5'-end of the 23S rRNA, where it nucleates assembly of the 50S subunit. Functionally, located at the polypeptide exit tunnel on the outside of the subunit. The sequence is that of Large ribosomal subunit protein uL24 from Pyrobaculum calidifontis (strain DSM 21063 / JCM 11548 / VA1).